Here is a 348-residue protein sequence, read N- to C-terminus: Sesquiterpene synthase MGU_11447 (348 aa).

The Mg(2+) site is built by D91 and D96. The DDXXXD motif signature appears at 91–96 (DDLFVD). R184 contributes to the substrate binding site. Positions 230, 234, and 238 each coordinate Mg(2+).

The protein belongs to the terpene synthase family. The cofactor is Mg(2+).

It catalyses the reaction (2E,6E)-farnesyl diphosphate + H2O = (+)-corvol ether B + diphosphate. The enzyme catalyses (2E,6E)-farnesyl diphosphate + H2O = (+)-corvol ether A + diphosphate. Its function is as follows. Terpene synthase that catalyzes the conversion of (2E,6E)-farnesyl diphosphate (FPP) into sesquiterpenes which are important for fungi-environment interactions. Produces a mixture consisting of 8 sesquiterpenes including corvol ethers A and B, as well as traces of epizonarene, gamma-cadinene, delta-cadinene, alpha-cadinene, alpha-cadinol, and an unidentified sesquiterpene. Produces both corvol ether A and corvol ether B in similar concentrations. The sequence is that of Sesquiterpene synthase MGU_11447 from Metarhizium guizhouense (strain ARSEF 977).